Here is a 314-residue protein sequence, read N- to C-terminus: Carbamate kinase (314 aa).

It belongs to the carbamate kinase family.

Its subcellular location is the cytoplasm. The catalysed reaction is hydrogencarbonate + NH4(+) + ATP = carbamoyl phosphate + ADP + H2O + H(+). Its pathway is metabolic intermediate metabolism; carbamoyl phosphate degradation; CO(2) and NH(3) from carbamoyl phosphate: step 1/1. The polypeptide is Carbamate kinase (arcC) (Latilactobacillus sakei (Lactobacillus sakei)).